The chain runs to 282 residues: Acetylglutamate kinase (282 aa).

Residues 62–63 (GG), arginine 84, and asparagine 178 each bind substrate. L-arginine contacts are provided by residues lysine 196, serine 214, and 266–269 (EIFS).

As to quaternary structure, homohexamer.

The protein localises to the cytoplasm. The enzyme catalyses N-acetyl-L-glutamate + ATP = N-acetyl-L-glutamyl 5-phosphate + ADP. The protein operates within amino-acid biosynthesis; L-arginine biosynthesis; N(2)-acetyl-L-ornithine from L-glutamate: step 2/4. With respect to regulation, allosterically inhibited by arginine. Catalyzes the ATP-dependent phosphorylation of N-acetyl-L-glutamate. The chain is Acetylglutamate kinase from Thermotoga maritima (strain ATCC 43589 / DSM 3109 / JCM 10099 / NBRC 100826 / MSB8).